Reading from the N-terminus, the 212-residue chain is Ribonuclease HII (212 aa).

The RNase H type-2 domain maps to 17-211 (RVLAGIDEAG…VLELLDLTDS (195 aa)). 3 residues coordinate a divalent metal cation: aspartate 23, glutamate 24, and aspartate 120.

Belongs to the RNase HII family. Mn(2+) is required as a cofactor. The cofactor is Mg(2+).

It is found in the cytoplasm. It carries out the reaction Endonucleolytic cleavage to 5'-phosphomonoester.. Endonuclease that specifically degrades the RNA of RNA-DNA hybrids. This chain is Ribonuclease HII, found in Chloroflexus aggregans (strain MD-66 / DSM 9485).